The following is a 133-amino-acid chain: S-adenosylmethionine decarboxylase proenzyme (133 aa).

Ser-65 (schiff-base intermediate with substrate; via pyruvic acid) is an active-site residue. At Ser-65 the chain carries Pyruvic acid (Ser); by autocatalysis. His-70 functions as the Proton acceptor; for processing activity in the catalytic mechanism. Residue Cys-85 is the Proton donor; for catalytic activity of the active site.

This sequence belongs to the prokaryotic AdoMetDC family. Type 1 subfamily. Heterotetramer of two alpha and two beta chains arranged as a dimer of alpha/beta heterodimers. Pyruvate serves as cofactor. In terms of processing, is synthesized initially as an inactive proenzyme. Formation of the active enzyme involves a self-maturation process in which the active site pyruvoyl group is generated from an internal serine residue via an autocatalytic post-translational modification. Two non-identical subunits are generated from the proenzyme in this reaction, and the pyruvate is formed at the N-terminus of the alpha chain, which is derived from the carboxyl end of the proenzyme. The post-translation cleavage follows an unusual pathway, termed non-hydrolytic serinolysis, in which the side chain hydroxyl group of the serine supplies its oxygen atom to form the C-terminus of the beta chain, while the remainder of the serine residue undergoes an oxidative deamination to produce ammonia and the pyruvoyl group blocking the N-terminus of the alpha chain.

The enzyme catalyses S-adenosyl-L-methionine + H(+) = S-adenosyl 3-(methylsulfanyl)propylamine + CO2. It functions in the pathway amine and polyamine biosynthesis; S-adenosylmethioninamine biosynthesis; S-adenosylmethioninamine from S-adenosyl-L-methionine: step 1/1. Functionally, catalyzes the decarboxylation of S-adenosylmethionine to S-adenosylmethioninamine (dcAdoMet), the propylamine donor required for the synthesis of the polyamines spermine and spermidine from the diamine putrescine. This Brevibacillus brevis (strain 47 / JCM 6285 / NBRC 100599) protein is S-adenosylmethionine decarboxylase proenzyme.